A 1460-amino-acid chain; its full sequence is ABC transporter C family member 5 (1460 aa).

Disordered stretches follow at residues 1-23 (MKYNNLENDDSDIHNNNNNNESE) and 37-68 (GNNNNDINNNNNINNNNDSLDYENNKGSKKKN). Residues 37–55 (GNNNNDINNNNNINNNNDS) are compositionally biased toward low complexity. Helical transmembrane passes span 196–216 (FALSWVHFGLNVISQFIGPIF), 238–258 (LGYYYALILFVNSMLGSIFLY), 320–340 (LIFAVPMIIVSMILLYDCVGW), 425–445 (LIVVVQSIPTIISIFMFTVYY), and 456–476 (IFAAVAYLNIIRVPFTFLPYG). Residues 196–482 (FALSWVHFGL…LPYGYNIYIQ (287 aa)) form the ABC transmembrane type-1 1 domain. The interval 537 to 567 (IKPQTNPPPPRTTPSNDKSSPSGNNSNNEKK) is disordered. A compositionally biased stretch (polar residues) spans 551 to 563 (SNDKSSPSGNNSN). The region spanning 560–783 (NNSNNEKKEV…INSAYGNSSL (224 aa)) is the ABC transporter 1 domain. 593 to 600 (GPVGSGKS) serves as a coordination point for ATP. 4 helical membrane-spanning segments follow: residues 842–862 (MYYVTAGGGFLFLIALLGYCI), 922–942 (AGEFLGVFIAIGVLTVLLIIV), 1014–1034 (ILVIISIATPWLLLPMTPIII), and 1108–1128 (WLGLRLSVLGNLITLLSCIFI). An ABC transmembrane type-1 2 domain is found at 853 to 1166 (FLIALLGYCI…ATQQLAELET (314 aa)). In terms of domain architecture, ABC transporter 2 spans 1210-1444 (IIFENVVMSY…ENSLFNWLID (235 aa)). Residue 1244–1251 (GRTGSGKS) participates in ATP binding.

This sequence belongs to the ABC transporter superfamily. ABCC family. Conjugate transporter (TC 3.A.1.208) subfamily.

It localises to the membrane. In Dictyostelium discoideum (Social amoeba), this protein is ABC transporter C family member 5 (abcC5).